Consider the following 328-residue polypeptide: Serine protease 27 (328 aa).

Residues 1 to 22 (MRQPHIAALLLLPLLLRSGTEG) form the signal peptide. Residues 23–37 (ARTLRACGHPKMFNR) constitute a propeptide, activation peptide. The Peptidase S1 domain occupies 38–280 (MVGGENALEG…HHKWIHQIIP (243 aa)). Cys63 and Cys79 are joined by a disulfide. The Charge relay system role is filled by His78. Asn82 is a glycosylation site (N-linked (GlcNAc...) asparagine). Residue Asp127 is the Charge relay system of the active site. Disulfide bonds link Cys161–Cys238, Cys194–Cys217, and Cys228–Cys256. The Charge relay system role is filled by Ser232.

Belongs to the peptidase S1 family.

It is found in the secreted. This chain is Serine protease 27 (Prss27), found in Mus musculus (Mouse).